The chain runs to 181 residues: 6,7-dimethyl-8-ribityllumazine synthase 2 (181 aa).

The tract at residues 1 to 23 is disordered; that stretch reads MSLPMTETVTDPAETAPPTAERS. 5-amino-6-(D-ribitylamino)uracil contacts are provided by residues Trp-40, 74–76, 98–100, and Ser-129; these read SFE and LVV.

The protein belongs to the DMRL synthase family.

It carries out the reaction (2S)-2-hydroxy-3-oxobutyl phosphate + 5-amino-6-(D-ribitylamino)uracil = 6,7-dimethyl-8-(1-D-ribityl)lumazine + phosphate + 2 H2O + H(+). The protein operates within cofactor biosynthesis; riboflavin biosynthesis; riboflavin from 2-hydroxy-3-oxobutyl phosphate and 5-amino-6-(D-ribitylamino)uracil: step 1/2. Functionally, catalyzes the formation of 6,7-dimethyl-8-ribityllumazine by condensation of 5-amino-6-(D-ribitylamino)uracil with 3,4-dihydroxy-2-butanone 4-phosphate. This is the penultimate step in the biosynthesis of riboflavin. In Rhodopseudomonas palustris (strain ATCC BAA-98 / CGA009), this protein is 6,7-dimethyl-8-ribityllumazine synthase 2.